A 428-amino-acid polypeptide reads, in one-letter code: MTSVVVVGTQWGDEGKGKITDFLSANAEVIARYQGGDNAGHTIVIDGKKFKLHLIPSGIFFPEKISVIGNGMVVNPKSLVKELSYLHEEGVTTDNLRISDRAHVILPYHIELDRLQEEAKGDNKIGTTIKGIGPAYMDKAARVGIRIADLLDKDIFRERLERNLAEKNRLFEKLYDSKAIVFDDIFEEYYEYGQQIKKYVIDTSVILNDALDNGKRVLFEGAQGVMLDIDQGTYPFVTSSNPVAGGVTIGSGVGPSKIDKVVGVCKAYTSRVGDGPFPTELFDEVGERIREVGHEYGTTTGRPRRVGWFDSVVMRHSRRVSGITNLSLNSIDVLSGLDTVKICVAYDLDGQRIDYYPASLEQLKRCKPIYEELPGWSEDITGVRNLEDLPENARNYVRRVSELVGVRISTFSVGPGREQTNILESVWS.

Residues 12–18 and 40–42 contribute to the GTP site; these read GDEGKGK and GHT. The active-site Proton acceptor is the D13. Positions 13 and 40 each coordinate Mg(2+). IMP is bound by residues 13-16, 38-41, T128, R142, Q223, T238, and R302; these read DEGK and NAGH. H41 functions as the Proton donor in the catalytic mechanism. Substrate is bound at residue 298–304; the sequence is TTTGRPR. GTP is bound by residues R304, 330 to 332, and 412 to 414; these read SID and SVG.

The protein belongs to the adenylosuccinate synthetase family. As to quaternary structure, homodimer. Mg(2+) is required as a cofactor.

It is found in the cytoplasm. It carries out the reaction IMP + L-aspartate + GTP = N(6)-(1,2-dicarboxyethyl)-AMP + GDP + phosphate + 2 H(+). Its pathway is purine metabolism; AMP biosynthesis via de novo pathway; AMP from IMP: step 1/2. Its function is as follows. Plays an important role in the de novo pathway of purine nucleotide biosynthesis. Catalyzes the first committed step in the biosynthesis of AMP from IMP. The protein is Adenylosuccinate synthetase of Streptococcus pneumoniae serotype 2 (strain D39 / NCTC 7466).